The following is a 457-amino-acid chain: Serine--tRNA ligase (457 aa).

252–254 (TAE) contributes to the L-serine binding site. Residues 283–285 (RKE) and V299 contribute to the ATP site. An L-serine-binding site is contributed by E306. Residue 370 to 373 (EMVS) coordinates ATP. T406 contributes to the L-serine binding site.

This sequence belongs to the class-II aminoacyl-tRNA synthetase family. Type-1 seryl-tRNA synthetase subfamily. Homodimer. The tRNA molecule binds across the dimer.

The protein localises to the cytoplasm. The catalysed reaction is tRNA(Ser) + L-serine + ATP = L-seryl-tRNA(Ser) + AMP + diphosphate + H(+). It catalyses the reaction tRNA(Sec) + L-serine + ATP = L-seryl-tRNA(Sec) + AMP + diphosphate + H(+). Its pathway is aminoacyl-tRNA biosynthesis; selenocysteinyl-tRNA(Sec) biosynthesis; L-seryl-tRNA(Sec) from L-serine and tRNA(Sec): step 1/1. Catalyzes the attachment of serine to tRNA(Ser). Is also able to aminoacylate tRNA(Sec) with serine, to form the misacylated tRNA L-seryl-tRNA(Sec), which will be further converted into selenocysteinyl-tRNA(Sec). The polypeptide is Serine--tRNA ligase (Saccharolobus islandicus (strain Y.N.15.51 / Yellowstone #2) (Sulfolobus islandicus)).